A 364-amino-acid chain; its full sequence is NAC transcription factor 56 (364 aa).

The tract at residues 1–23 is disordered; the sequence is MESTDSSGGPPPPQPNLPPGFRF. The segment covering 9–18 has biased composition (pro residues); sequence GPPPPQPNLP. The 162-residue stretch at 17-178 folds into the NAC domain; sequence LPPGFRFHPT…DWVLCRIYKK (162 aa). A DNA-binding region spans residues 116 to 184; sequence VGVKKALVFY…IYKKNNASRH (69 aa).

Stamen specific, in anthers from stage 8. Expressed in the outer integument, but seems not expressed in the embryo at the torpedo stage.

The protein localises to the nucleus. In terms of biological role, transcription factor of the NAC family. Together with NAC018/NARS2, regulates embryogenesis by regulating the development and degeneration of ovule integuments, a process required for intertissue communication between the embryo and the maternal integument. The protein is NAC transcription factor 56 of Arabidopsis thaliana (Mouse-ear cress).